The sequence spans 181 residues: SAGA-associated factor 11 (181 aa).

An SGF11-type zinc finger spans residues 93–114 (FNCMNCGRQIVAGRFAPHLEKC). Positions 116 to 125 (GKGRKARAKT) are enriched in basic residues. The interval 116 to 181 (GKGRKARAKT…FTVRENVKGD (66 aa)) is disordered. Low complexity predominate over residues 126–153 (TRSTTAAQNRNARRSPNPRYSPYPNSAS).

Belongs to the SGF11 family. As to quaternary structure, component of a deubiquitination module (DUB module) formed by ENY2, SGF11, and UBP22 in Arabidopsis. Interacts directly with ENY2 and UBP22. Interacts with DDA1. In terms of processing, ubiquitinated in DET1-dependent manner. Ubiquitination probably leads to its subsequent proteasomal degradation.

Its subcellular location is the nucleus. The protein localises to the nucleoplasm. Its function is as follows. Component of a deubiquitination module (DUB module) that specifically deubiquinates monoubiquinated histone H2B (H2Bub). Does not seem to be a component of the TREX-2 complex. Seems to act independently of the SAGA multiprotein complex. The DUB module is responsible for the major H2Bub deubiquitinase activity in Arabidopsis. The protein is SAGA-associated factor 11 of Arabidopsis thaliana (Mouse-ear cress).